An 81-amino-acid chain; its full sequence is MAHSVKVYDTCIGCTQCVRACPCDVLEMVPWDGCKAGQIASAPRTEDCIGCKRCETACPTDFLSVRVYLGAETTRSMGLAY.

4Fe-4S ferredoxin-type domains follow at residues 2–31 (AHSVKVYDTCIGCTQCVRACPCDVLEMVPW) and 39–68 (IASAPRTEDCIGCKRCETACPTDFLSVRVY). Residues cysteine 11, cysteine 14, cysteine 17, cysteine 21, cysteine 48, cysteine 51, cysteine 54, and cysteine 58 each coordinate [4Fe-4S] cluster.

In terms of assembly, the eukaryotic PSI reaction center is composed of at least 11 subunits. [4Fe-4S] cluster is required as a cofactor.

The protein localises to the plastid. The protein resides in the chloroplast thylakoid membrane. It catalyses the reaction reduced [plastocyanin] + hnu + oxidized [2Fe-2S]-[ferredoxin] = oxidized [plastocyanin] + reduced [2Fe-2S]-[ferredoxin]. Its function is as follows. Apoprotein for the two 4Fe-4S centers FA and FB of photosystem I (PSI); essential for photochemical activity. FB is the terminal electron acceptor of PSI, donating electrons to ferredoxin. The C-terminus interacts with PsaA/B/D and helps assemble the protein into the PSI complex. Required for binding of PsaD and PsaE to PSI. PSI is a plastocyanin/cytochrome c6-ferredoxin oxidoreductase, converting photonic excitation into a charge separation, which transfers an electron from the donor P700 chlorophyll pair to the spectroscopically characterized acceptors A0, A1, FX, FA and FB in turn. In Gracilaria tenuistipitata var. liui (Red alga), this protein is Photosystem I iron-sulfur center.